We begin with the raw amino-acid sequence, 47 residues long: Large ribosomal subunit protein bL27c-2 (47 aa).

Belongs to the bacterial ribosomal protein bL27 family.

It is found in the plastid. The protein localises to the chloroplast. The polypeptide is Large ribosomal subunit protein bL27c-2 (Cyanidium caldarium (Red alga)).